Consider the following 274-residue polypeptide: Diaminopimelate epimerase (274 aa).

2 residues coordinate substrate: N11 and N62. C71 (proton donor) is an active-site residue. Substrate is bound by residues 72–73 (GN), N157, N190, and 208–209 (ER). The Proton acceptor role is filled by C217. Substrate is bound at residue 218–219 (GT).

It belongs to the diaminopimelate epimerase family. Homodimer.

The protein localises to the cytoplasm. The catalysed reaction is (2S,6S)-2,6-diaminopimelate = meso-2,6-diaminopimelate. The protein operates within amino-acid biosynthesis; L-lysine biosynthesis via DAP pathway; DL-2,6-diaminopimelate from LL-2,6-diaminopimelate: step 1/1. Its function is as follows. Catalyzes the stereoinversion of LL-2,6-diaminopimelate (L,L-DAP) to meso-diaminopimelate (meso-DAP), a precursor of L-lysine and an essential component of the bacterial peptidoglycan. The sequence is that of Diaminopimelate epimerase from Elusimicrobium minutum (strain Pei191).